The following is a 572-amino-acid chain: NADP-dependent malic enzyme (572 aa).

Methionine 1 is modified (N-acetylmethionine). The Proton donor role is filled by tyrosine 102. Arginine 155 provides a ligand contact to NADP(+). Residue lysine 173 is the Proton acceptor of the active site. 3 residues coordinate a divalent metal cation: glutamate 245, aspartate 246, and aspartate 269. Residues aspartate 269 and 301–318 (GAGEAALGIAHLIVMALE) each bind NADP(+). Phosphoserine is present on serine 336. Asparagine 408 contributes to the NADP(+) binding site.

This sequence belongs to the malic enzymes family. As to quaternary structure, homotetramer. The cofactor is Mg(2+). Mn(2+) serves as cofactor. In terms of tissue distribution, expressed in all tissues tested including liver, placenta and white adipose tissue.

Its subcellular location is the cytoplasm. The catalysed reaction is (S)-malate + NADP(+) = pyruvate + CO2 + NADPH. It catalyses the reaction oxaloacetate + H(+) = pyruvate + CO2. In terms of biological role, catalyzes the oxidative decarboxylation of (S)-malate in the presence of NADP(+) and divalent metal ions, and decarboxylation of oxaloacetate. The protein is NADP-dependent malic enzyme of Homo sapiens (Human).